Consider the following 131-residue polypeptide: Sec-independent protein translocase protein TatB (131 aa).

Residues 2-22 (FANIGWWEMLVLVMVGLVVLG) traverse the membrane as a helical segment. Residues 90–131 (DSLFTGDFDRPTPKKPDAAGSAGPDATEQIGAGPIPFDSDAT) form a disordered region. A compositionally biased stretch (basic and acidic residues) spans 96 to 106 (DFDRPTPKKPD).

The protein belongs to the TatB family. As to quaternary structure, the Tat system comprises two distinct complexes: a TatABC complex, containing multiple copies of TatA, TatB and TatC subunits, and a separate TatA complex, containing only TatA subunits. Substrates initially bind to the TatABC complex, which probably triggers association of the separate TatA complex to form the active translocon.

The protein localises to the cell membrane. In terms of biological role, part of the twin-arginine translocation (Tat) system that transports large folded proteins containing a characteristic twin-arginine motif in their signal peptide across membranes. Together with TatC, TatB is part of a receptor directly interacting with Tat signal peptides. TatB may form an oligomeric binding site that transiently accommodates folded Tat precursor proteins before their translocation. This chain is Sec-independent protein translocase protein TatB, found in Mycobacterium tuberculosis (strain ATCC 25177 / H37Ra).